Here is a 64-residue protein sequence, read N- to C-terminus: Large ribosomal subunit protein bL35 (64 aa).

Residues 1–15 (MPKSKTHSGTAKRFK) are compositionally biased toward basic residues. The disordered stretch occupies residues 1–23 (MPKSKTHSGTAKRFKVSGSGKIL).

This sequence belongs to the bacterial ribosomal protein bL35 family.

The polypeptide is Large ribosomal subunit protein bL35 (Rhodococcus jostii (strain RHA1)).